Consider the following 667-residue polypeptide: Single-minded homolog 2 (667 aa).

Residues 1-53 form the bHLH domain; sequence MKEKSKNAAKTRREKENGEFYELAKLLPLPSAITSQLDKASIIRLTTSYLKMR. PAS domains lie at 77-149 and 218-288; these read AKEL…LHHH and PPSA…LVKG. One can recognise a PAC domain in the interval 292–335; it reads TKYYRLLSKRGGWVWVQSYATVVHNSRSSRPHCIVSVNYVLTEI. The 332-residue stretch at 336 to 667 folds into the Single-minded C-terminal domain; the sequence is EYKELQLSLE…GASVIITNGR (332 aa). Disordered stretches follow at residues 356 to 389, 409 to 428, and 500 to 520; these read WRTA…YPPQ, ASPP…SESS, and SSSS…RHSL. Residues 367-386 carry the Nuclear localization signal motif; that stretch reads RKLVKPKNTKMKTKLRTNPY. A compositionally biased stretch (basic residues) spans 369-381; that stretch reads LVKPKNTKMKTKL. Positions 409–419 are enriched in low complexity; the sequence is ASPPASAAAPP.

As to quaternary structure, efficient DNA binding requires dimerization with another bHLH protein. Heterodimer of SIM2 and ARNT.

It is found in the nucleus. Transcription factor that may be a master gene of CNS development in cooperation with Arnt. It may have pleiotropic effects in the tissues expressed during development. This Homo sapiens (Human) protein is Single-minded homolog 2 (SIM2).